The primary structure comprises 173 residues: MKKKEIVDDVTMKRAITRITYEIIERNKNLDKIVLAGIKTRGVYIAQRIQERLKQLENLDVPLIELDTKAYRDDVKSEQDTSLILIEIDGTDVILVDDVLYTGRTIRAAIDNIVSHGRPARVGLAVLVDRGHRELPIRADYVGKNIPTSQSEEIEVLVTEVDGKDSVNIIDPN.

The PRPP-binding motif lies at 93-105; the sequence is VILVDDVLYTGRT.

The protein belongs to the purine/pyrimidine phosphoribosyltransferase family. PyrR subfamily. As to quaternary structure, homodimer and homohexamer; in equilibrium.

The enzyme catalyses UMP + diphosphate = 5-phospho-alpha-D-ribose 1-diphosphate + uracil. Regulates transcriptional attenuation of the pyrimidine nucleotide (pyr) operon by binding in a uridine-dependent manner to specific sites on pyr mRNA. This disrupts an antiterminator hairpin in the RNA and favors formation of a downstream transcription terminator, leading to a reduced expression of downstream genes. Its function is as follows. Also displays a weak uracil phosphoribosyltransferase activity which is not physiologically significant. This Streptococcus thermophilus (strain ATCC BAA-491 / LMD-9) protein is Bifunctional protein PyrR.